A 215-amino-acid polypeptide reads, in one-letter code: Small ribosomal subunit protein uS3 (215 aa).

A KH type-2 domain is found at 39-109; the sequence is IRKFIKKRLE…EVLVDVKEVK (71 aa).

Belongs to the universal ribosomal protein uS3 family. Part of the 30S ribosomal subunit. Forms a tight complex with proteins S10 and S14.

Functionally, binds the lower part of the 30S subunit head. Binds mRNA in the 70S ribosome, positioning it for translation. The polypeptide is Small ribosomal subunit protein uS3 (Methylacidiphilum infernorum (isolate V4) (Methylokorus infernorum (strain V4))).